The following is a 64-amino-acid chain: Small ribosomal subunit protein bS21 (64 aa).

The interval 39–64 (EKPSVKRKKKALAAKKRAVKKARKSF) is disordered. The segment covering 43–64 (VKRKKKALAAKKRAVKKARKSF) has biased composition (basic residues).

It belongs to the bacterial ribosomal protein bS21 family.

The protein is Small ribosomal subunit protein bS21 (rpsU) of Myxococcus xanthus.